Reading from the N-terminus, the 427-residue chain is MAERFDVIVVGAGMAGNAAAYTLAKGGLKVLQIERGETPGSKNVQGAILYADAIEKIIPDFRDDAPLERHLIEQRVWVMDDASYGYHYRSEDFNKPPYNRYTIIRVHFDQWFNKKAREAGVLTICETRHDLLIEGGKVVGVRTDRQGGEVRADAVILADGVNSRLAVKAGFSRDQPENWALAVKEIHFLPQETMEARFNIGEEEAAIEMAGKIDAGMMGTGFLYTNKESITLGVGCMLSDFKQQKISPYELLDRMKTHPSIAPLIAGSDMKEYAAHLIPEGGYNAIPQVYGDGWMIAGDAPIRHGIHREGSNLAMTTGMLAAQTLVELRAADKPFSAANLAEYKKKLDDSFVMKDLKKYRRMPEIFHKNKQFFTTYPDLLSRAAQTLIRVDGVDKKTKEKEIKKSFIGLRSLFGLIGDAFKFWRAVE.

The protein belongs to the ETF-QO/FixC family. The cofactor is FAD.

Functionally, could be required for the formation of a functional nitrogenase Fe protein. Probably accepts electrons from FixA/FixB and reduces a quinone. This chain is Protein FixC (fixC), found in Azotobacter vinelandii.